Here is a 96-residue protein sequence, read N- to C-terminus: Co-chaperonin GroES (96 aa).

This sequence belongs to the GroES chaperonin family. As to quaternary structure, heptamer of 7 subunits arranged in a ring. Interacts with the chaperonin GroEL.

The protein localises to the cytoplasm. In terms of biological role, together with the chaperonin GroEL, plays an essential role in assisting protein folding. The GroEL-GroES system forms a nano-cage that allows encapsulation of the non-native substrate proteins and provides a physical environment optimized to promote and accelerate protein folding. GroES binds to the apical surface of the GroEL ring, thereby capping the opening of the GroEL channel. In Ralstonia nicotianae (strain ATCC BAA-1114 / GMI1000) (Ralstonia solanacearum), this protein is Co-chaperonin GroES.